The primary structure comprises 490 residues: GTPase Der (490 aa).

2 consecutive EngA-type G domains span residues 3-166 and 203-376; these read PVVA…MEDL and IKLA…DSST. GTP-binding positions include 9-16, 56-60, 118-121, 209-216, 256-260, and 321-324; these read GRPNVGKS, DTGGI, NKID, DTAGV, and NKWD. The region spanning 377 to 461 is the KH-like domain; that stretch reads RRVGTSMLTR…PIRIQFKEGE (85 aa).

The protein belongs to the TRAFAC class TrmE-Era-EngA-EngB-Septin-like GTPase superfamily. EngA (Der) GTPase family. Associates with the 50S ribosomal subunit.

Its function is as follows. GTPase that plays an essential role in the late steps of ribosome biogenesis. This is GTPase Der from Shigella boydii serotype 18 (strain CDC 3083-94 / BS512).